Reading from the N-terminus, the 590-residue chain is CTP synthase (590 aa).

Residues 1-281 (MPALRKHPQT…DAYVVRRLNL (281 aa)) form an amidoligase domain region. Serine 23 contacts CTP. Residue serine 23 coordinates UTP. ATP is bound by residues 24 to 29 (SLGKGL) and aspartate 81. Mg(2+) is bound by residues aspartate 81 and glutamate 155. Residues 162–164 (DIE), 202–207 (KTKPTQ), and lysine 238 contribute to the CTP site. UTP is bound by residues 202 to 207 (KTKPTQ) and lysine 238. Residues 306–554 (RIALVGKYID…IGAAIDYKAA (249 aa)) form the Glutamine amidotransferase type-1 domain. Residue glycine 369 coordinates L-glutamine. Residue cysteine 396 is the Nucleophile; for glutamine hydrolysis of the active site. Residues 397-400 (LGLQ), glutamate 419, and arginine 480 each bind L-glutamine. Catalysis depends on residues histidine 527 and glutamate 529.

It belongs to the CTP synthase family. Homotetramer.

The catalysed reaction is UTP + L-glutamine + ATP + H2O = CTP + L-glutamate + ADP + phosphate + 2 H(+). It catalyses the reaction L-glutamine + H2O = L-glutamate + NH4(+). It carries out the reaction UTP + NH4(+) + ATP = CTP + ADP + phosphate + 2 H(+). Its pathway is pyrimidine metabolism; CTP biosynthesis via de novo pathway; CTP from UDP: step 2/2. Its activity is regulated as follows. Allosterically activated by GTP, when glutamine is the substrate; GTP has no effect on the reaction when ammonia is the substrate. The allosteric effector GTP functions by stabilizing the protein conformation that binds the tetrahedral intermediate(s) formed during glutamine hydrolysis. Inhibited by the product CTP, via allosteric rather than competitive inhibition. Its function is as follows. Catalyzes the ATP-dependent amination of UTP to CTP with either L-glutamine or ammonia as the source of nitrogen. Regulates intracellular CTP levels through interactions with the four ribonucleotide triphosphates. This chain is CTP synthase, found in Mycolicibacterium smegmatis (strain ATCC 700084 / mc(2)155) (Mycobacterium smegmatis).